The following is a 168-amino-acid chain: G/U mismatch-specific DNA glycosylase (168 aa).

This sequence belongs to the uracil-DNA glycosylase (UDG) superfamily. TDG/mug family. Binds DNA as a monomer.

The protein resides in the cytoplasm. The catalysed reaction is Specifically hydrolyzes mismatched double-stranded DNA and polynucleotides, releasing free uracil.. In terms of biological role, excises ethenocytosine and uracil, which can arise by alkylation or deamination of cytosine, respectively, from the corresponding mispairs with guanine in ds-DNA. It is capable of hydrolyzing the carbon-nitrogen bond between the sugar-phosphate backbone of the DNA and the mispaired base. The complementary strand guanine functions in substrate recognition. Required for DNA damage lesion repair in stationary-phase cells. In Klebsiella pneumoniae subsp. pneumoniae (strain ATCC 700721 / MGH 78578), this protein is G/U mismatch-specific DNA glycosylase.